Consider the following 419-residue polypeptide: Lipid II:glycine glycyltransferase (419 aa).

It belongs to the FemABX family.

Its subcellular location is the cytoplasm. It catalyses the reaction beta-D-GlcNAc-(1-&gt;4)-Mur2Ac(oyl-L-Ala-D-isoglutaminyl-L-Lys-D-Ala-D-Ala)-di-trans,octa-cis-undecaprenyl diphosphate + glycyl-tRNA(Gly) = beta-D-GlcNAc-(1-&gt;4)-Mur2Ac(oyl-L-Ala-D-isoglutaminyl-L-Lys-(N(6)-Gly)-D-Ala-D-Ala)-di-trans,octa-cis-undecaprenyl diphosphate + tRNA(Gly) + H(+). Functionally, catalyzes the incorporation of amino acid(s) into the interchain peptide bridge of peptidoglycan, using aminoacyl-tRNA as amino acid donor. This is Lipid II:glycine glycyltransferase (femX) from Staphylococcus haemolyticus (strain JCSC1435).